Here is a 375-residue protein sequence, read N- to C-terminus: Deoxyhypusine synthase-like protein (375 aa).

This sequence belongs to the deoxyhypusine synthase family.

The sequence is that of Deoxyhypusine synthase-like protein from Elusimicrobium minutum (strain Pei191).